The chain runs to 138 residues: Rubber elongation factor protein (138 aa).

A2 carries the N-acetylalanine modification.

It belongs to the REF/SRPP family. In terms of assembly, in solution, able to form amyloid fibers and aggregates rich in beta-sheets. Interaction with membrane stabilizes the protein, inhibiting the amyloid state and aggregation. Not glycosylated. In terms of tissue distribution, localized in all laticifer layers.

The protein resides in the cytoplasm. May be part of the rubber biosynthesis machinery. Plays a role in rubber elongation. This chain is Rubber elongation factor protein, found in Hevea brasiliensis (Para rubber tree).